The sequence spans 173 residues: RNA pyrophosphohydrolase (173 aa).

A Nudix hydrolase domain is found at 6–149 (GFRANVGIIL…KRSVYRRALQ (144 aa)). The Nudix box signature appears at 38–59 (GGIDRGETPMDAMYRELWEEVG).

The protein belongs to the Nudix hydrolase family. RppH subfamily. It depends on a divalent metal cation as a cofactor.

In terms of biological role, accelerates the degradation of transcripts by removing pyrophosphate from the 5'-end of triphosphorylated RNA, leading to a more labile monophosphorylated state that can stimulate subsequent ribonuclease cleavage. This Psychrobacter cryohalolentis (strain ATCC BAA-1226 / DSM 17306 / VKM B-2378 / K5) protein is RNA pyrophosphohydrolase.